Reading from the N-terminus, the 464-residue chain is Phosphoglucosamine mutase (464 aa).

S112 functions as the Phosphoserine intermediate in the catalytic mechanism. Mg(2+) contacts are provided by S112, D252, D254, and D256. The residue at position 112 (S112) is a Phosphoserine.

It belongs to the phosphohexose mutase family. Mg(2+) serves as cofactor. Activated by phosphorylation.

It catalyses the reaction alpha-D-glucosamine 1-phosphate = D-glucosamine 6-phosphate. In terms of biological role, catalyzes the conversion of glucosamine-6-phosphate to glucosamine-1-phosphate. The polypeptide is Phosphoglucosamine mutase (Synechococcus sp. (strain CC9605)).